Here is a 250-residue protein sequence, read N- to C-terminus: Virulence plasmid protein pGP6-D-related protein (250 aa).

This sequence belongs to the UPF0137 (pGP6-D) family.

The sequence is that of Virulence plasmid protein pGP6-D-related protein from Chlamydia pneumoniae (Chlamydophila pneumoniae).